Here is a 234-residue protein sequence, read N- to C-terminus: 2-C-methyl-D-erythritol 4-phosphate cytidylyltransferase (234 aa).

This sequence belongs to the IspD/TarI cytidylyltransferase family. IspD subfamily.

It catalyses the reaction 2-C-methyl-D-erythritol 4-phosphate + CTP + H(+) = 4-CDP-2-C-methyl-D-erythritol + diphosphate. The protein operates within isoprenoid biosynthesis; isopentenyl diphosphate biosynthesis via DXP pathway; isopentenyl diphosphate from 1-deoxy-D-xylulose 5-phosphate: step 2/6. In terms of biological role, catalyzes the formation of 4-diphosphocytidyl-2-C-methyl-D-erythritol from CTP and 2-C-methyl-D-erythritol 4-phosphate (MEP). In Pseudomonas aeruginosa (strain ATCC 15692 / DSM 22644 / CIP 104116 / JCM 14847 / LMG 12228 / 1C / PRS 101 / PAO1), this protein is 2-C-methyl-D-erythritol 4-phosphate cytidylyltransferase.